A 159-amino-acid polypeptide reads, in one-letter code: Heterocyst differentiation protein HetP (159 aa).

Positions Met-1 to Tyr-50 are required to complement a hetP deletion.

Belongs to the HetP family. As to quaternary structure, in bacterial two-hybrid assays interacts weakly with Asl1930, Alr2902 and Alr3234.

Promotes heterocyst differentiation and commitment when nitrogen is limiting. Interplay between the 4 HetP paralogs controls the timing of commitment to heterocyst formation and its duration. Epistatic analysis show that the 3 paralogs act upstream of hetP to delay commitment (asl1930, alr3234) or inhibit development (alr2902). Asl1930 and Alr3234 must also attenuate the activity of Alr2902. Required for heterocyst formation. Functions directly downstream of master regulator HetR to promote heterocyst differentiation, functioning downstream of patterning (cell choice). Partially functionally redundant with homologs alr2902 and asl1930 but not alr3234. Overexpression leads to more than wild-type levels of heterocysts. Overexpression in the absence of hetR partially bypasses hetR deletion, allowing differentiation of heterocysts, although they only fix nitrogen in the absence of oxygen (a Fox- Fix+ phenotype), suggesting they are not fully. The protein is Heterocyst differentiation protein HetP of Nostoc sp. (strain PCC 7120 / SAG 25.82 / UTEX 2576).